Here is a 567-residue protein sequence, read N- to C-terminus: Type II secretion system protein E (567 aa).

An ATP-binding site is contributed by 325-332 (GPTGSGKT).

Belongs to the GSP E family. As to quaternary structure, forms homooligomers; most probably hexamers. Interacts with XpsL/GspL.

It is found in the cell inner membrane. The enzyme catalyses ATP + H2O + cellular proteinSide 1 = ADP + phosphate + cellular proteinSide 2.. In terms of biological role, ATPase component of the type II secretion system required for the energy-dependent secretion of extracellular factors such as proteases and toxins from the periplasm. Acts as a molecular motor to provide the energy that is required for assembly of the pseudopilus and the extrusion of substrates generated in the cytoplasm. This is Type II secretion system protein E (xpsE) from Xanthomonas campestris pv. campestris (strain ATCC 33913 / DSM 3586 / NCPPB 528 / LMG 568 / P 25).